The chain runs to 309 residues: Porphobilinogen deaminase (309 aa).

At Cys-241 the chain carries S-(dipyrrolylmethanemethyl)cysteine.

It belongs to the HMBS family. Monomer. Requires dipyrromethane as cofactor.

It carries out the reaction 4 porphobilinogen + H2O = hydroxymethylbilane + 4 NH4(+). It participates in porphyrin-containing compound metabolism; protoporphyrin-IX biosynthesis; coproporphyrinogen-III from 5-aminolevulinate: step 2/4. Functionally, tetrapolymerization of the monopyrrole PBG into the hydroxymethylbilane pre-uroporphyrinogen in several discrete steps. The polypeptide is Porphobilinogen deaminase (Bacillus cereus (strain ZK / E33L)).